Consider the following 388-residue polypeptide: Protein TsgA homolog (388 aa).

12 helical membrane passes run 12–32, 51–71, 77–97, 102–122, 137–157, 163–183, 203–223, 246–266, 272–292, 294–314, 331–351, and 356–376; these read CISF…GIFL, TFLN…TNII, LIFG…SHNL, ISMF…TYII, LTDS…ALII, WYWV…ITIN, FSIL…LSFI, SAFW…LKFF, IITL…FYDY, LLYI…TIII, YILT…GPIV, and IFSA…LVII.

The protein belongs to the major facilitator superfamily. TsgA family.

It localises to the cell membrane. In Buchnera aphidicola subsp. Baizongia pistaciae (strain Bp), this protein is Protein TsgA homolog.